The primary structure comprises 169 residues: Glutathione peroxidase (169 aa).

U43 is an active-site residue. U43 is a non-standard amino acid (selenocysteine).

Belongs to the glutathione peroxidase family.

It catalyses the reaction 2 glutathione + H2O2 = glutathione disulfide + 2 H2O. This chain is Glutathione peroxidase (GPX1), found in Schistosoma mansoni (Blood fluke).